Consider the following 330-residue polypeptide: Aspartate--ammonia ligase (330 aa).

It belongs to the class-II aminoacyl-tRNA synthetase family. AsnA subfamily.

The protein localises to the cytoplasm. It carries out the reaction L-aspartate + NH4(+) + ATP = L-asparagine + AMP + diphosphate + H(+). It functions in the pathway amino-acid biosynthesis; L-asparagine biosynthesis; L-asparagine from L-aspartate (ammonia route): step 1/1. This is Aspartate--ammonia ligase from Salmonella paratyphi A (strain ATCC 9150 / SARB42).